We begin with the raw amino-acid sequence, 277 residues long: Phosphonoacetaldehyde hydrolase (277 aa).

Catalysis depends on aspartate 20, which acts as the Nucleophile. The Mg(2+) site is built by aspartate 20 and alanine 22. Residue lysine 61 is the Schiff-base intermediate with substrate of the active site. Aspartate 194 serves as a coordination point for Mg(2+).

The protein belongs to the HAD-like hydrolase superfamily. PhnX family. Homodimer. Mg(2+) is required as a cofactor.

The enzyme catalyses phosphonoacetaldehyde + H2O = acetaldehyde + phosphate + H(+). Functionally, involved in phosphonate degradation. This is Phosphonoacetaldehyde hydrolase from Syntrophobacter fumaroxidans (strain DSM 10017 / MPOB).